Here is a 317-residue protein sequence, read N- to C-terminus: Melanocyte-stimulating hormone receptor (317 aa).

Topologically, residues 1–37 are extracellular; that stretch reads MPVQGSQRRLLGSLNSTPTATPHLGLAANQTGARCLE. Asn-29 is a glycosylation site (N-linked (GlcNAc...) asparagine). The chain crosses the membrane as a helical span at residues 38–63; it reads VSVPDGLFLSLGLVSLVENVLVVTAI. The Cytoplasmic segment spans residues 64–72; sequence AKNRNLHSP. Residues 73-93 form a helical membrane-spanning segment; it reads MYCFICCLALSDLLVSGSNML. At 94-118 the chain is on the extracellular side; that stretch reads ETAVTLLLEAGVLAARAAVVQQLDN. A helical membrane pass occupies residues 119–140; the sequence is VIDVITCSSMLSSLCFLGAIAV. At 141–163 the chain is on the cytoplasmic side; sequence DRYISIFYALRYHSIVTLPRARR. A helical transmembrane segment spans residues 164–183; the sequence is AVAAIWVASVLFSTLFIAYY. The Extracellular portion of the chain corresponds to 184-191; sequence DHAAVLLC. The chain crosses the membrane as a helical span at residues 192 to 211; sequence LVIFFLAMLVLMAVLYVHML. Residues 212 to 240 are Cytoplasmic-facing; the sequence is ARACQHAQGIARLHKRQRLAHQGFGLKGA. A helical membrane pass occupies residues 241–266; it reads ATLTILLGIFFLCWGPFFLHLTLIVL. Residues 267–279 lie on the Extracellular side of the membrane; the sequence is CPQHPTCSCIFKN. Residues 280-300 traverse the membrane as a helical segment; sequence FNLFLALIICNAIIDPLIYAF. Over 301–317 the chain is Cytoplasmic; sequence RSQELRRTLKEVLLCSW. Cys-315 carries the S-palmitoyl cysteine lipid modification.

This sequence belongs to the G-protein coupled receptor 1 family. Interacts with MGRN1, but does not undergo MGRN1-mediated ubiquitination; this interaction competes with GNAS-binding and thus inhibits agonist-induced cAMP production. Interacts with OPN3; the interaction results in a decrease in MC1R-mediated cAMP signaling and ultimately a decrease in melanin production in melanocytes.

The protein resides in the cell membrane. Functionally, receptor for MSH (alpha, beta and gamma) and ACTH. The activity of this receptor is mediated by G proteins which activate adenylate cyclase. Mediates melanogenesis, the production of eumelanin (black/brown) and phaeomelanin (red/yellow), via regulation of cAMP signaling in melanocytes. The sequence is that of Melanocyte-stimulating hormone receptor (MC1R) from Papio anubis (Olive baboon).